The chain runs to 338 residues: Putative acyl-[acyl-carrier-protein] desaturase DesA1 (338 aa).

Fe cation is bound by residues Glu76, Glu107, His110, Glu167, Glu197, and His200. Residues 314 to 328 (EARTGKKVSAHELHK) are compositionally biased toward basic and acidic residues. Residues 314–338 (EARTGKKVSAHELHKTAGKLAMSRR) are disordered.

The protein belongs to the fatty acid desaturase type 2 family. In terms of assembly, homodimer. The cofactor is Fe(2+).

Its subcellular location is the cell surface. It functions in the pathway lipid metabolism; fatty acid metabolism. May be a desaturase involved in mycobacterial fatty acid biosynthesis. The protein is Putative acyl-[acyl-carrier-protein] desaturase DesA1 (desA1) of Mycobacterium tuberculosis (strain CDC 1551 / Oshkosh).